The chain runs to 252 residues: Imidazole glycerol phosphate synthase subunit HisF (252 aa).

Residues aspartate 11 and aspartate 130 contribute to the active site.

Belongs to the HisA/HisF family. Heterodimer of HisH and HisF.

Its subcellular location is the cytoplasm. It catalyses the reaction 5-[(5-phospho-1-deoxy-D-ribulos-1-ylimino)methylamino]-1-(5-phospho-beta-D-ribosyl)imidazole-4-carboxamide + L-glutamine = D-erythro-1-(imidazol-4-yl)glycerol 3-phosphate + 5-amino-1-(5-phospho-beta-D-ribosyl)imidazole-4-carboxamide + L-glutamate + H(+). The protein operates within amino-acid biosynthesis; L-histidine biosynthesis; L-histidine from 5-phospho-alpha-D-ribose 1-diphosphate: step 5/9. IGPS catalyzes the conversion of PRFAR and glutamine to IGP, AICAR and glutamate. The HisF subunit catalyzes the cyclization activity that produces IGP and AICAR from PRFAR using the ammonia provided by the HisH subunit. The protein is Imidazole glycerol phosphate synthase subunit HisF of Geobacillus sp. (strain WCH70).